A 74-amino-acid polypeptide reads, in one-letter code: MNYLKMSEQKKKSNLNTELTAKLYLALDDLTMALATEDKEEVRKSEVFQKALEVVKVVKEMRRLQVKPAEGEEK.

This is an uncharacterized protein from Saccharolobus islandicus (Sulfolobus islandicus).